Consider the following 319-residue polypeptide: Putative peptide permease protein BOV_A0351 (319 aa).

Transmembrane regions (helical) follow at residues 9–29 (LLIG…LLQL), 102–122 (LLLM…TGII), 138–158 (LALL…LYVF), 182–202 (LLRH…ALIM), 242–262 (LPVV…AIFI), and 284–304 (YPVI…VNIL). The ABC transmembrane type-1 domain occupies 98 to 305 (IGPTLLLMAA…ACVIIVNILT (208 aa)).

This sequence belongs to the binding-protein-dependent transport system permease family. As to quaternary structure, the complex is composed of two ATP-binding proteins (BOV_A0347 and BOV_A0348), two transmembrane proteins (BOV_A0350 and BOV_A0351) and a solute-binding protein (BOV_A0352).

The protein resides in the cell inner membrane. Its function is as follows. Probably part of an ABC transporter complex that could be involved in peptide import. Probably responsible for the translocation of the substrate across the membrane. The polypeptide is Putative peptide permease protein BOV_A0351 (Brucella ovis (strain ATCC 25840 / 63/290 / NCTC 10512)).